We begin with the raw amino-acid sequence, 448 residues long: Methylenetetrahydrofolate--tRNA-(uracil-5-)-methyltransferase TrmFO (448 aa).

10 to 15 (GAGLAG) is an FAD binding site.

Belongs to the MnmG family. TrmFO subfamily. FAD is required as a cofactor.

Its subcellular location is the cytoplasm. The enzyme catalyses uridine(54) in tRNA + (6R)-5,10-methylene-5,6,7,8-tetrahydrofolate + NADH + H(+) = 5-methyluridine(54) in tRNA + (6S)-5,6,7,8-tetrahydrofolate + NAD(+). The catalysed reaction is uridine(54) in tRNA + (6R)-5,10-methylene-5,6,7,8-tetrahydrofolate + NADPH + H(+) = 5-methyluridine(54) in tRNA + (6S)-5,6,7,8-tetrahydrofolate + NADP(+). Catalyzes the folate-dependent formation of 5-methyl-uridine at position 54 (M-5-U54) in all tRNAs. The chain is Methylenetetrahydrofolate--tRNA-(uracil-5-)-methyltransferase TrmFO from Lactococcus lactis subsp. cremoris (strain MG1363).